The sequence spans 316 residues: 4-hydroxy-3-methylbut-2-enyl diphosphate reductase (316 aa).

Residue C17 coordinates [4Fe-4S] cluster. (2E)-4-hydroxy-3-methylbut-2-enyl diphosphate-binding residues include H46 and H79. The dimethylallyl diphosphate site is built by H46 and H79. Isopentenyl diphosphate contacts are provided by H46 and H79. C101 serves as a coordination point for [4Fe-4S] cluster. H129 lines the (2E)-4-hydroxy-3-methylbut-2-enyl diphosphate pocket. H129 provides a ligand contact to dimethylallyl diphosphate. H129 serves as a coordination point for isopentenyl diphosphate. E131 acts as the Proton donor in catalysis. (2E)-4-hydroxy-3-methylbut-2-enyl diphosphate is bound at residue T170. C200 is a [4Fe-4S] cluster binding site. (2E)-4-hydroxy-3-methylbut-2-enyl diphosphate-binding residues include S228, S229, N230, and S273. Dimethylallyl diphosphate-binding residues include S228, S229, N230, and S273. Positions 228, 229, 230, and 273 each coordinate isopentenyl diphosphate.

The protein belongs to the IspH family. [4Fe-4S] cluster is required as a cofactor.

The enzyme catalyses isopentenyl diphosphate + 2 oxidized [2Fe-2S]-[ferredoxin] + H2O = (2E)-4-hydroxy-3-methylbut-2-enyl diphosphate + 2 reduced [2Fe-2S]-[ferredoxin] + 2 H(+). It catalyses the reaction dimethylallyl diphosphate + 2 oxidized [2Fe-2S]-[ferredoxin] + H2O = (2E)-4-hydroxy-3-methylbut-2-enyl diphosphate + 2 reduced [2Fe-2S]-[ferredoxin] + 2 H(+). It functions in the pathway isoprenoid biosynthesis; dimethylallyl diphosphate biosynthesis; dimethylallyl diphosphate from (2E)-4-hydroxy-3-methylbutenyl diphosphate: step 1/1. Its pathway is isoprenoid biosynthesis; isopentenyl diphosphate biosynthesis via DXP pathway; isopentenyl diphosphate from 1-deoxy-D-xylulose 5-phosphate: step 6/6. Its function is as follows. Catalyzes the conversion of 1-hydroxy-2-methyl-2-(E)-butenyl 4-diphosphate (HMBPP) into a mixture of isopentenyl diphosphate (IPP) and dimethylallyl diphosphate (DMAPP). Acts in the terminal step of the DOXP/MEP pathway for isoprenoid precursor biosynthesis. This is 4-hydroxy-3-methylbut-2-enyl diphosphate reductase from Ruegeria pomeroyi (strain ATCC 700808 / DSM 15171 / DSS-3) (Silicibacter pomeroyi).